A 147-amino-acid polypeptide reads, in one-letter code: Large ribosomal subunit protein uL22 (147 aa).

Belongs to the universal ribosomal protein uL22 family. As to quaternary structure, part of the 50S ribosomal subunit.

This protein binds specifically to 23S rRNA; its binding is stimulated by other ribosomal proteins, e.g. L4, L17, and L20. It is important during the early stages of 50S assembly. It makes multiple contacts with different domains of the 23S rRNA in the assembled 50S subunit and ribosome. In terms of biological role, the globular domain of the protein is located near the polypeptide exit tunnel on the outside of the subunit, while an extended beta-hairpin is found that lines the wall of the exit tunnel in the center of the 70S ribosome. In Fervidobacterium nodosum (strain ATCC 35602 / DSM 5306 / Rt17-B1), this protein is Large ribosomal subunit protein uL22.